A 230-amino-acid polypeptide reads, in one-letter code: Secretory carrier-associated membrane protein 4 (230 aa).

The Cytoplasmic portion of the chain corresponds to 1–39; sequence MSGKENNFPPLPKFIPLKPCFYQNFSDEIPIEHQVLVKR. The next 4 membrane-spanning stretches (helical) occupy residues 40 to 60, 61 to 81, 105 to 125, and 149 to 169; these read IYRL…ACLA, WWIA…LLLF, FMAF…QAVG, and VVML…AVMI. The Cytoplasmic portion of the chain corresponds to 170-230; it reads MKVHSIYRGT…SYPASGGQWP (61 aa). Thr194 carries the phosphothreonine modification. The disordered stretch occupies residues 208–230; it reads FSGNSLPEYPTVPSYPASGGQWP.

The protein belongs to the SCAMP family.

The protein resides in the membrane. Its function is as follows. Probably involved in membrane protein trafficking. This chain is Secretory carrier-associated membrane protein 4 (SCAMP4), found in Bos taurus (Bovine).